The following is a 269-amino-acid chain: Tryptophan synthase alpha chain (269 aa).

Active-site proton acceptor residues include Glu-49 and Asp-60.

This sequence belongs to the TrpA family. In terms of assembly, tetramer of two alpha and two beta chains.

The enzyme catalyses (1S,2R)-1-C-(indol-3-yl)glycerol 3-phosphate + L-serine = D-glyceraldehyde 3-phosphate + L-tryptophan + H2O. Its pathway is amino-acid biosynthesis; L-tryptophan biosynthesis; L-tryptophan from chorismate: step 5/5. In terms of biological role, the alpha subunit is responsible for the aldol cleavage of indoleglycerol phosphate to indole and glyceraldehyde 3-phosphate. The sequence is that of Tryptophan synthase alpha chain from Enterobacter sp. (strain 638).